We begin with the raw amino-acid sequence, 274 residues long: Ribulose-phosphate 3-epimerase, chloroplastic (274 aa).

The N-terminal 39 residues, 1 to 39, are a transit peptide targeting the chloroplast; the sequence is MASPSSSSSLCSTFASPRAASLGRRLAFSSPRKAFRVRA. Ser56 lines the substrate pocket. His81, Asp83, and His114 together coordinate a divalent metal cation. The active-site Proton acceptor is Asp83. Substrate contacts are provided by residues His114, 192–195, 225–227, and 247–248; these read GFGG, DGG, and GS. Asp225 contacts a divalent metal cation. Residue Asp225 is the Proton donor of the active site.

It belongs to the ribulose-phosphate 3-epimerase family. Homooctamer. Co(2+) is required as a cofactor. Fe(2+) serves as cofactor. Requires Mn(2+) as cofactor. The cofactor is Zn(2+).

It is found in the plastid. The protein localises to the chloroplast thylakoid membrane. It carries out the reaction D-ribulose 5-phosphate = D-xylulose 5-phosphate. Its pathway is carbohydrate biosynthesis; Calvin cycle. In terms of biological role, catalyzes the reversible epimerization of D-ribulose 5-phosphate to D-xylulose 5-phosphate. The polypeptide is Ribulose-phosphate 3-epimerase, chloroplastic (RPE) (Oryza sativa subsp. japonica (Rice)).